The chain runs to 102 residues: Small ribosomal subunit protein uS10 (102 aa).

Belongs to the universal ribosomal protein uS10 family. In terms of assembly, part of the 30S ribosomal subunit.

Functionally, involved in the binding of tRNA to the ribosomes. The protein is Small ribosomal subunit protein uS10 of Methanococcus maripaludis (strain C7 / ATCC BAA-1331).